The primary structure comprises 843 residues: Beta-mannosidase B (843 aa).

Glu430 serves as the catalytic Proton donor. Asn721 carries an N-linked (GlcNAc...) asparagine glycan.

Belongs to the glycosyl hydrolase 2 family. Beta-mannosidase B subfamily.

The catalysed reaction is Hydrolysis of terminal, non-reducing beta-D-mannose residues in beta-D-mannosides.. The protein operates within glycan metabolism; N-glycan degradation. Exoglycosidase that cleaves the single beta-linked mannose residue from the non-reducing end of beta-mannosidic oligosaccharides of various complexity and length. Prefers mannobiose over mannotriose and has no activity against polymeric mannan. Is also severely restricted by galactosyl substitutions at the +1 subsite. In Aspergillus terreus (strain NIH 2624 / FGSC A1156), this protein is Beta-mannosidase B (mndB).